The sequence spans 820 residues: Pentatricopeptide repeat-containing protein At3g22150, chloroplastic (820 aa).

Residues 1-42 (MAGSALPLPPPPPLSLQSPSQNQTRHSSTFSPPTLTPQTPSI) are disordered. Residues 1-50 (MAGSALPLPPPPPLSLQSPSQNQTRHSSTFSPPTLTPQTPSIRSRLSKIC) constitute a chloroplast transit peptide. Polar residues predominate over residues 22-42 (NQTRHSSTFSPPTLTPQTPSI). PPR repeat units follow at residues 69–99 (TTVL…MKKT), 106–136 (DAYT…LIRC), 141–177 (SRVV…MRRK), 178–212 (NVVA…EVKP), 213–247 (SPVS…GDEY), 250–284 (DLFV…NIEV), 285–316 (WNTM…EIVS), 317–347 (DEVT…VSKN), 352–382 (PIVI…MRER), 383–417 (DVVS…GFKI), 418–452 (DYIT…GIQF), 485–519 (DQAT…NIRP), 520–550 (NAVT…SIRQ), 555–585 (NVFV…TKER), 586–620 (NSVT…GIKP), 621–651 (DAIT…MREV), and 657–691 (SSEH…GNIA). A type E motif region spans residues 693–770 (LWGSLLGSCK…EVGRSGIEIA (78 aa)). The tract at residues 771–801 (GYVNCFVSRDQEHPHSSEIYDVIDGLAKDMR) is type E(+) motif.

This sequence belongs to the PPR family. PCMP-E subfamily.

It localises to the plastid. Its subcellular location is the chloroplast. The polypeptide is Pentatricopeptide repeat-containing protein At3g22150, chloroplastic (PCMP-E95) (Arabidopsis thaliana (Mouse-ear cress)).